Here is a 158-residue protein sequence, read N- to C-terminus: Probable inactive acireductone dioxygenase 2 (158 aa).

This sequence belongs to the acireductone dioxygenase (ARD) family.

It is found in the cytoplasm. The protein localises to the nucleus. Its function is as follows. Probable inactive acireductone dioxygenase. This is Probable inactive acireductone dioxygenase 2 from Caenorhabditis elegans.